A 545-amino-acid polypeptide reads, in one-letter code: MSLNMYLGEVQGQTQSMNAVCNATIQGMEQVIQSIDAFAIDTVLQGQTYSSAKSFFVQTFRPLAQGIIYLCEELIRQNDAFPSQFQSQVASTDVIEQEILEQIREIDRMKASMEAISQAMPIPGMDAMANLFTVMRKKLQEKLDHLYQFNQTSSNNYSTALQLAASIAAGLAEVQSGKGFSPASGTFSTQGLNMEWTTSIQAITEERARQAANSIEEGEMCGKLPEKSTGEKIWDGIVEGTGQAVSDTIDGIKALGDWETWENMGNAALHPIDTLSTMYNTLSDSFINDVINGDAESRAKWGSYALTQVGLGLIGDKGLSKASKLGQAGKVTKLAKNKIPQAVSHITSNLQMGDRFAFAGGNSLRFRFDTPDFKKAEEKLSTYQFARGESNYGGSNFVNENHRSSLSNREIISNLQHTEKFRPNTLKHILEGEINWRGDAMGYHTEVLENTPGKIISGTEEILNDQGIYKARVEVNGTPKTGNRGFSTFFPKDWSPQKIVDNINEAYNNRTYEFGNTYSGIGSEGIRISMYIDGNGKIISAFPAE.

The LXG domain occupies 1 to 217 (MSLNMYLGEV…ARQAANSIEE (217 aa)).

The protein in the N-terminal section; belongs to the LXG family. In the C-terminal section; belongs to the bacterial EndoU family. Probably interacts with cognate immunity protein BC_0921. The interaction inhibits the toxic activity of BC_0921.

Its subcellular location is the secreted. Its function is as follows. Toxic component of an LXG toxin-immunity module. The C-terminus (residues 322-545) has RNase activity in E.coli which is neutralized by cognate immunity protein BC_0921, but not by immunity proteins specific to other toxins with the LXG domain. Degrades 5S rRNA and several tRNAs in vitro; cleavage is endonucleolytic within the anticodon loop for tRNA(GAU-Ile) and tRNA(UUC-Glu) but total for 5S rRNA and at least one other tRNA. RNase activity is suppressed by cognate immunity protein BC_0921. The sequence is that of Toxin BC_0920 from Bacillus cereus (strain ATCC 14579 / DSM 31 / CCUG 7414 / JCM 2152 / NBRC 15305 / NCIMB 9373 / NCTC 2599 / NRRL B-3711).